A 162-amino-acid polypeptide reads, in one-letter code: SsrA-binding protein (162 aa).

Residues 137–154 (HDKREDTKAREWDREKAR) are compositionally biased toward basic and acidic residues. A disordered region spans residues 137–162 (HDKREDTKAREWDREKARIMKNKHRG).

Belongs to the SmpB family.

It localises to the cytoplasm. Its function is as follows. Required for rescue of stalled ribosomes mediated by trans-translation. Binds to transfer-messenger RNA (tmRNA), required for stable association of tmRNA with ribosomes. tmRNA and SmpB together mimic tRNA shape, replacing the anticodon stem-loop with SmpB. tmRNA is encoded by the ssrA gene; the 2 termini fold to resemble tRNA(Ala) and it encodes a 'tag peptide', a short internal open reading frame. During trans-translation Ala-aminoacylated tmRNA acts like a tRNA, entering the A-site of stalled ribosomes, displacing the stalled mRNA. The ribosome then switches to translate the ORF on the tmRNA; the nascent peptide is terminated with the 'tag peptide' encoded by the tmRNA and targeted for degradation. The ribosome is freed to recommence translation, which seems to be the essential function of trans-translation. In Aeromonas salmonicida (strain A449), this protein is SsrA-binding protein.